We begin with the raw amino-acid sequence, 124 residues long: Fluoride-specific ion channel FluC (124 aa).

Helical transmembrane passes span 5–25, 32–52, 67–87, and 96–116; these read VYIALLGALGCLCRYFLSGFV, SFPYGTLAVNLIGAFLIGLIM, FAITIGFLGGLTTFSTFSFET, and LLIAIVNVLVSVVACLTCTWI. Gly75 and Thr78 together coordinate Na(+).

It belongs to the fluoride channel Fluc/FEX (TC 1.A.43) family.

It localises to the cell inner membrane. It catalyses the reaction fluoride(in) = fluoride(out). Na(+) is not transported, but it plays an essential structural role and its presence is essential for fluoride channel function. Functionally, fluoride-specific ion channel. Important for reducing fluoride concentration in the cell, thus reducing its toxicity. This is Fluoride-specific ion channel FluC from Citrifermentans bemidjiense (strain ATCC BAA-1014 / DSM 16622 / JCM 12645 / Bem) (Geobacter bemidjiensis).